A 385-amino-acid polypeptide reads, in one-letter code: MALSLESTSFPMLAVSRSTASELPGGFNVSHNSSWTGPTDPSSLQDLVATGVIGAVLSTMGVVGVVGNVYTLVVMCRFLRASASMYVYVVNLALADLLYLLSIPFIVATYVTKDWHFGDVGCRVLFSLDFLTMHASIFTLTIMSSERYAAVLRPLDTVQRSKGYRKLLALGTWLLALLLTLPMMLAIRLVRRGSKSLCLPAWGPRAHRTYLTLLFGTSIVGPGLVIGLLYIRLARAYWLSQQASFKQTRRLPNPRVLYLILGIVLLFWACFLPFWLWQLLAQYHQAMPLTPETARIINYLTACLTYGNSCINPFLYTLLTKNYREYLRGRQRSLGSSCRGPGSAGSFLSSRVHLQQDSGRSLSSNSQQATETLVLSPVPPNGAFV.

Topologically, residues 1 to 53 are extracellular; it reads MALSLESTSFPMLAVSRSTASELPGGFNVSHNSSWTGPTDPSSLQDLVATGVI. 2 N-linked (GlcNAc...) asparagine glycosylation sites follow: Asn-28 and Asn-32. Residues 54 to 76 form a helical membrane-spanning segment; that stretch reads GAVLSTMGVVGVVGNVYTLVVMC. Residues 77 to 86 lie on the Cytoplasmic side of the membrane; the sequence is RFLRASASMY. Residues 87–112 form a helical membrane-spanning segment; that stretch reads VYVVNLALADLLYLLSIPFIVATYVT. The Extracellular portion of the chain corresponds to 113-123; sequence KDWHFGDVGCR. An intrachain disulfide couples Cys-122 to Cys-198. Residues 124-145 traverse the membrane as a helical segment; sequence VLFSLDFLTMHASIFTLTIMSS. Over 146–166 the chain is Cytoplasmic; it reads ERYAAVLRPLDTVQRSKGYRK. A helical transmembrane segment spans residues 167–185; the sequence is LLALGTWLLALLLTLPMML. Residues 186–208 are Extracellular-facing; that stretch reads AIRLVRRGSKSLCLPAWGPRAHR. A helical transmembrane segment spans residues 209-231; it reads TYLTLLFGTSIVGPGLVIGLLYI. Residues 232 to 257 are Cytoplasmic-facing; it reads RLARAYWLSQQASFKQTRRLPNPRVL. Residues 258–283 form a helical membrane-spanning segment; it reads YLILGIVLLFWACFLPFWLWQLLAQY. The Extracellular portion of the chain corresponds to 284–298; it reads HQAMPLTPETARIIN. Residues 299–320 form a helical membrane-spanning segment; the sequence is YLTACLTYGNSCINPFLYTLLT. Residues 321 to 385 lie on the Cytoplasmic side of the membrane; sequence KNYREYLRGR…SPVPPNGAFV (65 aa).

Belongs to the G-protein coupled receptor 1 family.

The protein resides in the cell membrane. High affinity receptor for urotensin-2 and urotensin-2B. The activity of this receptor is mediated by a G-protein that activate a phosphatidylinositol-calcium second messenger system. This is Urotensin-2 receptor (Uts2r) from Mus musculus (Mouse).